Here is a 400-residue protein sequence, read N- to C-terminus: MSKEKIAIAYSGGLDTSIMIKWLKDKYDAEIVAVTGNLGQQKEIENLESKAIATGASKFQFLDLRKEFVEEYIWRALKAGALYEDVYPLATALGRPLLAKAIVDTALAEGCTMLAHGCTGKGNDQVRFEVTFASLAPHLKVLAPLREWEFTSRESEIAYALEHNIQVSATKKNPYSIDENIWGISIECGVLEDPMVAPPEDAYQITTSPENAPNTPAVVEIEFEKGIPVSLDGKKMSGLDLIIRLNEIGAANGVGRLDMIENRVVGIKSREIYEAPAATILHFAHRELERLTLEKSVFQYKKNISQDYANIIYNGLWFSPMRKALDAFVDETQNPVTGLVRLKLYKGGVSLLGRNSPYSLYNEELATYTESDTFNHKAAAGFIHLYGLGLKTYSEVHTAK.

9–17 is an ATP binding site; it reads AYSGGLDTS. Tyr-87 is an L-citrulline binding site. Gly-117 provides a ligand contact to ATP. Residues Thr-119, Asn-123, and Asp-124 each coordinate L-aspartate. An L-citrulline-binding site is contributed by Asn-123. L-citrulline is bound by residues Arg-127, Ser-176, Ser-185, Glu-261, and Tyr-273.

Belongs to the argininosuccinate synthase family. Type 1 subfamily. As to quaternary structure, homotetramer.

It is found in the cytoplasm. It carries out the reaction L-citrulline + L-aspartate + ATP = 2-(N(omega)-L-arginino)succinate + AMP + diphosphate + H(+). The protein operates within amino-acid biosynthesis; L-arginine biosynthesis; L-arginine from L-ornithine and carbamoyl phosphate: step 2/3. This chain is Argininosuccinate synthase, found in Pelodictyon phaeoclathratiforme (strain DSM 5477 / BU-1).